Consider the following 107-residue polypeptide: Putative double-stranded DNA mimic protein NTHI1680 (107 aa).

The protein belongs to the putative dsDNA mimic protein family.

Its function is as follows. May act as a double-stranded DNA (dsDNA) mimic. Probably regulates the activity of a dsDNA-binding protein. The sequence is that of Putative double-stranded DNA mimic protein NTHI1680 from Haemophilus influenzae (strain 86-028NP).